A 329-amino-acid polypeptide reads, in one-letter code: GTP 3',8-cyclase (329 aa).

In terms of domain architecture, Radical SAM core spans 8–234 (AFARKFYYLR…QLRQRSDGPA (227 aa)). Arg-17 serves as a coordination point for GTP. [4Fe-4S] cluster is bound by residues Cys-24 and Cys-28. Residue Tyr-30 participates in S-adenosyl-L-methionine binding. Cys-31 provides a ligand contact to [4Fe-4S] cluster. Residue Arg-68 participates in GTP binding. Gly-72 lines the S-adenosyl-L-methionine pocket. Thr-99 contributes to the GTP binding site. Ser-123 contacts S-adenosyl-L-methionine. Lys-160 contacts GTP. Met-194 serves as a coordination point for S-adenosyl-L-methionine. [4Fe-4S] cluster-binding residues include Cys-257 and Cys-260. 262-264 (RLR) is a GTP binding site. Cys-274 provides a ligand contact to [4Fe-4S] cluster.

This sequence belongs to the radical SAM superfamily. MoaA family. As to quaternary structure, monomer and homodimer. The cofactor is [4Fe-4S] cluster.

It carries out the reaction GTP + AH2 + S-adenosyl-L-methionine = (8S)-3',8-cyclo-7,8-dihydroguanosine 5'-triphosphate + 5'-deoxyadenosine + L-methionine + A + H(+). It participates in cofactor biosynthesis; molybdopterin biosynthesis. Functionally, catalyzes the cyclization of GTP to (8S)-3',8-cyclo-7,8-dihydroguanosine 5'-triphosphate. The sequence is that of GTP 3',8-cyclase from Salmonella heidelberg (strain SL476).